Consider the following 364-residue polypeptide: Chorismate synthase (364 aa).

Arg48 provides a ligand contact to NADP(+). FMN contacts are provided by residues 131–133, 243–244, Gly288, 303–307, and Arg329; these read RSS, NA, and KPTSS.

Belongs to the chorismate synthase family. As to quaternary structure, homotetramer. Requires FMNH2 as cofactor.

It catalyses the reaction 5-O-(1-carboxyvinyl)-3-phosphoshikimate = chorismate + phosphate. Its pathway is metabolic intermediate biosynthesis; chorismate biosynthesis; chorismate from D-erythrose 4-phosphate and phosphoenolpyruvate: step 7/7. Catalyzes the anti-1,4-elimination of the C-3 phosphate and the C-6 proR hydrogen from 5-enolpyruvylshikimate-3-phosphate (EPSP) to yield chorismate, which is the branch point compound that serves as the starting substrate for the three terminal pathways of aromatic amino acid biosynthesis. This reaction introduces a second double bond into the aromatic ring system. This Brucella abortus (strain S19) protein is Chorismate synthase.